The sequence spans 145 residues: D-aminoacyl-tRNA deacylase (145 aa).

Positions 137–138 match the Gly-cisPro motif, important for rejection of L-amino acids motif; the sequence is GP.

Belongs to the DTD family. As to quaternary structure, homodimer.

It localises to the cytoplasm. The catalysed reaction is glycyl-tRNA(Ala) + H2O = tRNA(Ala) + glycine + H(+). The enzyme catalyses a D-aminoacyl-tRNA + H2O = a tRNA + a D-alpha-amino acid + H(+). An aminoacyl-tRNA editing enzyme that deacylates mischarged D-aminoacyl-tRNAs. Also deacylates mischarged glycyl-tRNA(Ala), protecting cells against glycine mischarging by AlaRS. Acts via tRNA-based rather than protein-based catalysis; rejects L-amino acids rather than detecting D-amino acids in the active site. By recycling D-aminoacyl-tRNA to D-amino acids and free tRNA molecules, this enzyme counteracts the toxicity associated with the formation of D-aminoacyl-tRNA entities in vivo and helps enforce protein L-homochirality. This Yersinia enterocolitica serotype O:8 / biotype 1B (strain NCTC 13174 / 8081) protein is D-aminoacyl-tRNA deacylase.